Consider the following 87-residue polypeptide: U3-theraphotoxin-Hhn1e (87 aa).

The N-terminal stretch at 1 to 24 (MVNMKASMFLTFAGLVLLFVVCYA) is a signal peptide. Residues 25 to 52 (SESEEKEFPKGMLSSIFAVDNDFKQEER) constitute a propeptide that is removed on maturation. 3 cysteine pairs are disulfide-bonded: Cys54–Cys67, Cys61–Cys72, and Cys66–Cys79.

It belongs to the neurotoxin 10 (Hwtx-1) family. 51 (Hntx-8) subfamily. Hntx-8 sub-subfamily. In terms of tissue distribution, expressed by the venom gland.

The protein localises to the secreted. Ion channel inhibitor. The polypeptide is U3-theraphotoxin-Hhn1e (Cyriopagopus hainanus (Chinese bird spider)).